Reading from the N-terminus, the 402-residue chain is MSEPIDILIAGAGIGGLSCALALHQAGIGKVTLLESSSEIRPLGVGINIQPAAVEALAELGLGPALAATAIPTHELRYIDQSGATVWSEPRGVEAGNAYPQYSIHRGELQMILLAAVRERLGQQAVRTGLGVERIEERDGRVLIGARDGHGKPQALGADVLVGADGIHSAVRAHLHPDQRPLSHGGITMWRGVTEFDRFLDGKTMIVANDEHWSRLVAYPISARHAAEGKSLVNWVCMVPSAAVGQLDNEADWNRDGRLEDVLPFFADWDLGWFDIRDLLTRNQLILQYPMVDRDPLPHWGRGRITLLGDAAHLMYPMGANGASQAILDGIELAAALARNADVAAALREYEEARRPTANKIILANREREKEEWAAASRPKTEKSAALEAITGSYRNQVERPR.

FAD-binding positions include 14–15 (IG), 35–36 (ES), 43–45 (LGV), arginine 106, valine 132, arginine 191, and aspartate 310. Over residues 368 to 385 (REKEEWAAASRPKTEKSA) the composition is skewed to basic and acidic residues. Residues 368–402 (REKEEWAAASRPKTEKSAALEAITGSYRNQVERPR) are disordered.

In terms of assembly, monomer in solution. Probably interacts transiently with PhzM. Requires FAD as cofactor.

It carries out the reaction 5-methyl-phenazine-1-carboxylate + NADH + O2 + 2 H(+) = pyocyanin + CO2 + NAD(+) + H2O. It participates in secondary metabolite biosynthesis; pyocyanine biosynthesis. Its function is as follows. Involved in the biosynthesis of pyocyanine, a blue-pigmented phenazine derivative, which plays a role in virulence. Catalyzes the oxidative decarboxylation of 5-methylphenazine-1-carboxylate (5-methyl-PCA) to pyocyanine. Can also act on phenazine-1-carboxylate (PCA), converting it into 1-hydroxyphenazine (1-HP). However, PCA is a poor substrate. The polypeptide is 5-methylphenazine-1-carboxylate 1-monooxygenase (Pseudomonas aeruginosa (strain ATCC 15692 / DSM 22644 / CIP 104116 / JCM 14847 / LMG 12228 / 1C / PRS 101 / PAO1)).